Consider the following 170-residue polypeptide: MEGIIRGRVWRFGDNVDTDMIIPGRYLRTFSLDELASHVMEGARPEFASQVRKGDIIVAGRNFGCGSSREQAPVALKHAGVVAIIAESFARIFYRNAINIGLPVIMAKVDADDGDEVSIDLRSGQIRNLTAGSEYRMKPFNDYMLSILEDGGLVNHYLKTIDTGISGDEG.

Residues 26–29 (YLRT) carry the YLRT motif.

It belongs to the LeuD family. LeuD type 2 subfamily. Heterotetramer of 2 HacA and 2 HacB proteins.

It catalyses the reaction (2R)-homocitrate = (2R,3S)-homoisocitrate. The enzyme catalyses (2R)-homocitrate = cis-homoaconitate + H2O. The catalysed reaction is (2R,3S)-homoisocitrate = cis-homoaconitate + H2O. It carries out the reaction cis-(homo)2aconitate + H2O = (2R,3S)-iso(homo)2citrate. It catalyses the reaction cis-(homo)3aconitate + H2O = (2R,3S)-iso(homo)3citrate. Its pathway is organic acid metabolism; 2-oxosuberate biosynthesis. Functionally, component of a hydro-lyase with broad substrate specificity for cis-unsaturated tricarboxylic acids. Catalyzes both the reversible dehydration of (R)-homocitrate ((R)-2-hydroxybutane-1,2,4-tricarboxylate) to produce cis-homoaconitate ((Z)-but-1-ene-1,2,4-tricarboxylate), and its hydration to homoisocitrate ((1R,2S)-1-hydroxybutane-1,2,4-tricarboxylate). Is also able to hydrate the analogous longer chain substrates cis-homo(2)-aconitate, cis-homo(3)-aconitate. These reactions are part of the biosynthesis pathway of coenzyme B. The polypeptide is Methanogen homoaconitase small subunit (hacB) (Methanothermobacter thermautotrophicus (strain ATCC 29096 / DSM 1053 / JCM 10044 / NBRC 100330 / Delta H) (Methanobacterium thermoautotrophicum)).